We begin with the raw amino-acid sequence, 216 residues long: Transmembrane emp24 domain-containing protein p24delta5 (216 aa).

The N-terminal stretch at 1–27 is a signal peptide; that stretch reads MAINRIAHGSLFLTVVLFFLTVNYGEA. Residues 28-183 are Lumenal-facing; sequence IWLTIPTTGG…REVSETTNSR (156 aa). The GOLD domain occupies 38-151; it reads TKCVSEEIQS…IEGVELQLRR (114 aa). N86 is a glycosylation site (N-linked (GlcNAc...) asparagine). Residues 137–159 adopt a coiled-coil conformation; that stretch reads AKKEKIEGVELQLRRLEGLVLSI. R169 and R174 each carry omega-N-methylated arginine. A helical membrane pass occupies residues 184 to 204; that stretch reads VAWFSIMSLGVCVVVVGSQIL. At 205 to 216 the chain is on the cytoplasmic side; it reads YLKRYFHKKKLI. The COPII vesicle coat-binding motif lies at 209–210; the sequence is YF. Residues 209–216 carry the COPI vesicle coat-binding motif; sequence YFHKKKLI.

The protein belongs to the EMP24/GP25L family. Probably oligomerizes with other members of the EMP24/GP25L family. Associates with the COPI vesicle coat (coatomer). Associates with the COPII vesicle coat (coatomer). Interacts with p24beta2.

It localises to the endoplasmic reticulum membrane. Functionally, involved in vesicular protein trafficking. Mainly functions in the early secretory pathway. Thought to act as cargo receptor at the lumenal side for incorporation of secretory cargo molecules into transport vesicles and to be involved in vesicle coat formation at the cytoplasmic side. Interacts with p24beta2 at endoplasmic reticulum export sites for endoplasmic reticulum exit and coupled transport to the Golgi apparatus. Once in the Golgi, interacts very efficiently with the COPI machinery for retrograde transport back to the endoplasmic reticulum. The protein is Transmembrane emp24 domain-containing protein p24delta5 of Arabidopsis thaliana (Mouse-ear cress).